The chain runs to 1353 residues: Inhibitor of Bruton tyrosine kinase (1353 aa).

ANK repeat units follow at residues 51-80 (FGRN…DLLV) and 85-114 (SGWT…SLYI). RCC1 repeat units follow at residues 141 to 194 (PTDV…FLSQ), 195 to 246 (KGQV…VLTE), and 248 to 301 (GCVY…LWTR). BTB domains follow at residues 564-644 (HDVT…DFLT) and 768-836 (CDVT…VVIK). One copy of the ANK 3 repeat lies at 806-835 (SSCAALEMPIHSDILKVILDYLYTDEAVVI). A disordered region spans residues 970–1001 (HSETMFKKAKTKAKKKPRKRSDSSGGYNLSDI). A compositionally biased stretch (basic residues) spans 976–988 (KKAKTKAKKKPRK). Residue Ser-990 is modified to Phosphoserine. A compositionally biased stretch (polar residues) spans 992 to 1001 (SSGGYNLSDI). Ser-1004, Ser-1030, Ser-1033, Ser-1039, Ser-1045, Ser-1054, Ser-1083, Ser-1111, Ser-1113, and Ser-1116 each carry phosphoserine. The segment at 1134–1155 (KCGATPKSHLGKTVSHGVKLSQ) is disordered.

Interacts with the PH domain of BTK. Isoform 2 does not interact with BTK. As to expression, expressed in DeFew, HEK293T, HeLa and in Jurkat, MC3 and NB4 lymphoid cells (at protein level). Isoform 1 is the predominant isoform expressed in all examined tissues and cell lines. Highly expressed in hemopoietic tissues (fetal liver, spleen, lymph node, thymus, peripheral blood leukocytes and bone marrow). Weakly or not expressed in other tissues.

The protein resides in the cytoplasm. It is found in the membrane. Its subcellular location is the nucleus. Acts as an inhibitor of BTK tyrosine kinase activity, thereby playing a role in B-cell development. Down-regulates BTK kinase activity, leading to interference with BTK-mediated calcium mobilization and NF-kappa-B-driven transcription. This is Inhibitor of Bruton tyrosine kinase (IBTK) from Homo sapiens (Human).